A 228-amino-acid chain; its full sequence is Claudin-10 (228 aa).

Residues 1–21 traverse the membrane as a helical segment; that stretch reads MASTASEIIAFMVSISGWVLV. Residues 22-80 lie on the Extracellular side of the membrane; it reads SSTLPTDYWKVSTIDGTVITTATYWANLWKACVTDSTGVSNCKDFPSMLALDGYIQACR. A helical membrane pass occupies residues 81–101; it reads GLMIAAVSLGFFGSIFALFGM. Topologically, residues 102–115 are cytoplasmic; sequence KCTKVGGSDKAKAK. A helical transmembrane segment spans residues 116 to 136; sequence IACLAGIVFILSGLCSMTGCS. Residues 137-160 lie on the Extracellular side of the membrane; sequence LYANKITTEFFDPLFVEQKYELGA. A helical transmembrane segment spans residues 161-181; the sequence is ALFIGWAGASLCIIGGVIFCF. Residues 182–228 are Cytoplasmic-facing; the sequence is SISDNNKTPRYAYNGATSVMSSRTKYHGGEDFKTTNPSKQFDKNAYV.

The protein belongs to the claudin family. In terms of assembly, can form homodimers both in trans (interaction between CLDN10 molecules in opposing membranes) and in cis (interaction between CLDN10 molecules within one membrane). Interacts with CLDN19.

Its subcellular location is the cell junction. The protein localises to the tight junction. It is found in the cell membrane. It carries out the reaction Na(+)(in) = Na(+)(out). The catalysed reaction is Li(+)(in) = Li(+)(out). The enzyme catalyses K(+)(in) = K(+)(out). It catalyses the reaction Rb(+)(in) = Rb(+)(out). It carries out the reaction Cs(+)(in) = Cs(+)(out). The catalysed reaction is NH4(+)(in) = NH4(+)(out). The enzyme catalyses methylamine(out) = methylamine(in). It catalyses the reaction Mg(2+)(in) = Mg(2+)(out). It carries out the reaction Ca(2+)(in) = Ca(2+)(out). The catalysed reaction is Sr(2+)(in) = Sr(2+)(out). The enzyme catalyses chloride(in) = chloride(out). It catalyses the reaction nitrate(in) = nitrate(out). In terms of biological role, forms paracellular channels: polymerizes in tight junction strands with cation- and anion-selective channels through the strands, conveying epithelial permeability in a process known as paracellular tight junction permeability. In sweat glands and in the thick ascending limb (TAL) of Henle's loop in kidney, it controls paracellular sodium permeability which is essential for proper sweat production and renal function. In renal proximal tubules, it conveys selective chloride over hydrogencarbonate anion permeability which is required for renal chloride reabsorption and salt homeostasis. This chain is Claudin-10 (CLDN10), found in Pongo abelii (Sumatran orangutan).